The primary structure comprises 188 residues: Putative manganese efflux pump MntP (188 aa).

6 consecutive transmembrane segments (helical) span residues 3–23 (ISATILLAFGMSMDAFAASIG), 41–61 (LIFGAIETLTPLIGWSLGMLA), 62–82 (SQFILEWNHWIAFTLLVFLGG), 106–128 (WILVTTAIATSLDAMAVGVGLAF), 143–163 (ATLIMSTIGMMVGRFIGPLLG), and 168–188 (ILGGIVLIGIGGQILWSHFAG).

It belongs to the MntP (TC 9.B.29) family.

Its subcellular location is the cell inner membrane. Functionally, probably functions as a manganese efflux pump. The polypeptide is Putative manganese efflux pump MntP (Enterobacter sp. (strain 638)).